The primary structure comprises 195 residues: dCTP deaminase, dUMP-forming (195 aa).

DCTP-binding positions include arginine 105 to arginine 110, aspartate 123, threonine 131 to glutamate 133, glutamine 152, tyrosine 166, lysine 173, and glutamine 177. Catalysis depends on glutamate 133, which acts as the Proton donor/acceptor. Positions proline 161–glutamine 195 are disordered. The span at proline 165–aspartate 176 shows a compositional bias: basic and acidic residues. The segment covering isoleucine 185 to glutamine 195 has biased composition (basic and acidic residues).

It belongs to the dCTP deaminase family. As to quaternary structure, homotrimer.

It catalyses the reaction dCTP + 2 H2O = dUMP + NH4(+) + diphosphate. It participates in pyrimidine metabolism; dUMP biosynthesis; dUMP from dCTP: step 1/1. Bifunctional enzyme that catalyzes both the deamination of dCTP to dUTP and the hydrolysis of dUTP to dUMP without releasing the toxic dUTP intermediate. The protein is dCTP deaminase, dUMP-forming of Halobacterium salinarum (strain ATCC 700922 / JCM 11081 / NRC-1) (Halobacterium halobium).